The chain runs to 523 residues: ATP-dependent RNA helicase dbp8 (523 aa).

A disordered region spans residues 1–52 (MAPPRPEETISEDLDESSGSSETEQPDIQTRAPKRRRLSASSDDSYVAPAPL). Positions 93 to 121 (SSFSALNVAPWLVGSLTTLAVRKPTAIQK) match the Q motif motif. The Helicase ATP-binding domain occupies 124–303 (IPEILNGKDC…NMPRAANKPP (180 aa)). 137-144 (SRTGSGKT) contributes to the ATP binding site. A DEAD box motif is present at residues 246-249 (DEAD). Positions 335-492 (AFLHVLLSTE…GRVVRTGVLK (158 aa)) constitute a Helicase C-terminal domain.

It belongs to the DEAD box helicase family. DDX49/DBP8 subfamily.

Its subcellular location is the nucleus. It is found in the nucleolus. It carries out the reaction ATP + H2O = ADP + phosphate + H(+). Its function is as follows. ATP-binding RNA helicase involved in 40S ribosomal subunit biogenesis and is required for the normal formation of 18S rRNAs through pre-rRNA processing at A0, A1 and A2 sites. Required for vegetative growth. The protein is ATP-dependent RNA helicase dbp8 (dbp8) of Aspergillus clavatus (strain ATCC 1007 / CBS 513.65 / DSM 816 / NCTC 3887 / NRRL 1 / QM 1276 / 107).